Consider the following 298-residue polypeptide: Multifunctional dioxygenase ausE (298 aa).

2 residues coordinate substrate: Arg72 and Gln127. Residues His130 and Asp132 each contribute to the Fe cation site. Thr167 is a binding site for substrate. His214 provides a ligand contact to Fe cation. Arg226 lines the substrate pocket.

It belongs to the PhyH family. As to quaternary structure, homodimer. Fe cation serves as cofactor.

The catalysed reaction is preaustinoid A1 + 2-oxoglutarate + O2 = preaustinoid A2 + succinate + CO2 + H2O. The enzyme catalyses preaustinoid A2 + 2-oxoglutarate + O2 = preaustinoid A3 + succinate + CO2 + H2O. It catalyses the reaction berkeleyone A + 2-oxoglutarate + O2 = preaustinoid A + succinate + CO2 + H2O. Its pathway is secondary metabolite biosynthesis; terpenoid biosynthesis. Functionally, multifunctional dioxygenase; part of the gene cluster B that mediates the biosynthesis of austinol and dehydroaustinol, two fungal meroterpenoids. The first step of the pathway is the synthesis of 3,5-dimethylorsellinic acid by the polyketide synthase ausA. 3,5-dimethylorsellinic acid is then prenylated by the polyprenyl transferase ausN. Further epoxidation by the FAD-dependent monooxygenase ausM and cyclization by the probable terpene cyclase ausL lead to the formation of protoaustinoid A. Protoaustinoid A is then oxidized to spiro-lactone preaustinoid A3 by the combined action of the FAD-binding monooxygenases ausB and ausC, and the dioxygenase ausE. Acid-catalyzed keto-rearrangement and ring contraction of the tetraketide portion of preaustinoid A3 by ausJ lead to the formation of preaustinoid A4. The aldo-keto reductase ausK, with the help of ausH, is involved in the next step by transforming preaustinoid A4 into isoaustinone which is in turn hydroxylated by the P450 monooxygenase ausI to form austinolide. Finally, the cytochrome P450 monooxygenase ausG modifies austinolide to austinol. Austinol can be further modified to dehydroaustinol which forms a diffusible complex with diorcinol that initiates conidiation. Due to genetic rearrangements of the clusters and the subsequent loss of some enzymes, the end products of the Emericella nidulans austinoid biosynthesis clusters are austinol and dehydroaustinol, even if additional enzymes, such as the O-acetyltransferase ausQ and the cytochrome P450 monooxygenase ausR are still functional. This Emericella nidulans (strain FGSC A4 / ATCC 38163 / CBS 112.46 / NRRL 194 / M139) (Aspergillus nidulans) protein is Multifunctional dioxygenase ausE.